Consider the following 257-residue polypeptide: Large ribosomal subunit protein uL2 (257 aa).

Glycyl lysine isopeptide (Lys-Gly) (interchain with G-Cter in SUMO2) cross-links involve residues Lys-42 and Lys-149. Positions 207–232 (VEHPFGGGNHQHIGKPSTIRRDAPAG) are disordered. At His-216 the chain carries (3S)-3-hydroxyhistidine. Glycyl lysine isopeptide (Lys-Gly) (interchain with G-Cter in SUMO2) cross-links involve residues Lys-234 and Lys-250.

The protein belongs to the universal ribosomal protein uL2 family. Component of the large ribosomal subunit. Interacts with CRY1. In terms of processing, hydroxylated on His-216 by RIOX1. The modification is impaired by hypoxia.

The protein localises to the cytoplasm. Its function is as follows. Component of the large ribosomal subunit. The ribosome is a large ribonucleoprotein complex responsible for the synthesis of proteins in the cell. This is Large ribosomal subunit protein uL2 (RPL8) from Bos taurus (Bovine).